A 60-amino-acid chain; its full sequence is Large ribosomal subunit protein bL33 (60 aa).

The protein belongs to the bacterial ribosomal protein bL33 family.

This Chlorobium phaeovibrioides (strain DSM 265 / 1930) (Prosthecochloris vibrioformis (strain DSM 265)) protein is Large ribosomal subunit protein bL33.